The sequence spans 561 residues: Formate--tetrahydrofolate ligase (561 aa).

70–77 serves as a coordination point for ATP; that stretch reads TPAGEGKT.

It belongs to the formate--tetrahydrofolate ligase family.

It carries out the reaction (6S)-5,6,7,8-tetrahydrofolate + formate + ATP = (6R)-10-formyltetrahydrofolate + ADP + phosphate. Its pathway is one-carbon metabolism; tetrahydrofolate interconversion. The chain is Formate--tetrahydrofolate ligase from Pelagibacter ubique (strain HTCC1062).